A 352-amino-acid polypeptide reads, in one-letter code: MDYQVSSPIYDIDYYTSEPCQKINVKQIAARLLPPLYSLVFIFGFVGNMLVILILINCKRLKSMTDIYLLNLAISDLFFLLTVPFWAHYAAAQWDFGNTMCQLLTGLYFIGFFSGIFFIILLTIDRYLAIVHAVFALKARTVTFGVVTSVITWVVAVFASLPGIIFTRSQKEGLHYTCSSHFPYSQYQFWKNFQTLKIVILGLVLPLLVMVICYSGILKTLLRCRNEKKRHRAVRLIFTIMIVYFLFWAPYNIVLLLNTFQEFFGLNNCSSSNRLDQAMQVTETLGMTHCCINPIIYAFVGEKFRNYLLVFFQKHIAKRFCKCCSIFQQEAPERASSVYTRSTGEQEISVGL.

The Extracellular segment spans residues 1 to 30 (MDYQVSSPIYDIDYYTSEPCQKINVKQIAA). Tyrosine 3 is subject to Sulfotyrosine. Residues serine 6 and serine 7 are each glycosylated (O-linked (GalNAc...) serine). 3 positions are modified to sulfotyrosine: tyrosine 10, tyrosine 14, and tyrosine 15. 2 cysteine pairs are disulfide-bonded: cysteine 20–cysteine 269 and cysteine 101–cysteine 178. The chain crosses the membrane as a helical span at residues 31–58 (RLLPPLYSLVFIFGFVGNMLVILILINC). Residues 59–68 (KRLKSMTDIY) lie on the Cytoplasmic side of the membrane. A helical membrane pass occupies residues 69 to 89 (LLNLAISDLFFLLTVPFWAHY). Residues 90–102 (AAAQWDFGNTMCQ) lie on the Extracellular side of the membrane. A helical membrane pass occupies residues 103 to 124 (LLTGLYFIGFFSGIFFIILLTI). Over 125–141 (DRYLAIVHAVFALKART) the chain is Cytoplasmic. A helical membrane pass occupies residues 142 to 166 (VTFGVVTSVITWVVAVFASLPGIIF). The Extracellular portion of the chain corresponds to 167-198 (TRSQKEGLHYTCSSHFPYSQYQFWKNFQTLKI). A helical membrane pass occupies residues 199 to 218 (VILGLVLPLLVMVICYSGIL). Topologically, residues 219 to 235 (KTLLRCRNEKKRHRAVR) are cytoplasmic. The chain crosses the membrane as a helical span at residues 236–260 (LIFTIMIVYFLFWAPYNIVLLLNTF). Residues 261–277 (QEFFGLNNCSSSNRLDQ) are Extracellular-facing. Residues 278–301 (AMQVTETLGMTHCCINPIIYAFVG) traverse the membrane as a helical segment. The Cytoplasmic segment spans residues 302 to 352 (EKFRNYLLVFFQKHIAKRFCKCCSIFQQEAPERASSVYTRSTGEQEISVGL). Residues cysteine 321, cysteine 323, and cysteine 324 are each lipidated (S-palmitoyl cysteine). Phosphoserine; by BARK1 occurs at positions 336, 337, 342, and 349.

The protein belongs to the G-protein coupled receptor 1 family. Interacts with PRAF2. Efficient ligand binding to CCL3/MIP-1alpha and CCL4/MIP-1beta requires sulfation, O-glycosylation and sialic acid modifications. Glycosylation on Ser-6 is required for efficient binding of CCL4. Interacts with GRK2. Interacts with ARRB1 and ARRB2. Interacts with CNIH4. Interacts with S100A4; this interaction stimulates T-lymphocyte chemotaxis. In terms of processing, sulfated on at least 2 of the N-terminal tyrosines. Sulfation is required for efficient binding of the chemokines, CCL3 and CCL4. Post-translationally, palmitoylation in the C-terminal is important for cell surface expression. Phosphorylation on serine residues in the C-terminal is stimulated by binding CC chemokines especially by APO-RANTES. In terms of processing, O-glycosylated, but not N-glycosylated. Ser-6 appears to be the major site even if Ser-7 may be also O-glycosylated. Also sialylated glycans present which contribute to chemokine binding. Thr-16 and Ser-17 may also be glycosylated and, if so, with small moieties such as a T-antigen.

The protein resides in the cell membrane. Receptor for a number of inflammatory CC-chemokines including CCL3/MIP-1-alpha, CCL4/MIP-1-beta and RANTES and subsequently transduces a signal by increasing the intracellular calcium ion level. May play a role in the control of granulocytic lineage proliferation or differentiation. Participates in T-lymphocyte migration to the infection site by acting as a chemotactic receptor. This Pan paniscus (Pygmy chimpanzee) protein is C-C chemokine receptor type 5 (CCR5).